The chain runs to 690 residues: Glycine--tRNA ligase beta subunit (690 aa).

The protein belongs to the class-II aminoacyl-tRNA synthetase family. As to quaternary structure, tetramer of two alpha and two beta subunits.

Its subcellular location is the cytoplasm. It catalyses the reaction tRNA(Gly) + glycine + ATP = glycyl-tRNA(Gly) + AMP + diphosphate. This Buchnera aphidicola subsp. Acyrthosiphon pisum (strain Tuc7) protein is Glycine--tRNA ligase beta subunit.